A 109-amino-acid polypeptide reads, in one-letter code: Nascent polypeptide-associated complex protein (109 aa).

Positions 3 to 70 (PMNPKQMKKM…YEVVKRPPKI (68 aa)) constitute an NAC-A/B domain.

The protein belongs to the NAC-alpha family. Homodimer. Interacts with the ribosome. Binds ribosomal RNA.

Its function is as follows. Contacts the emerging nascent chain on the ribosome. The protein is Nascent polypeptide-associated complex protein of Archaeoglobus fulgidus (strain ATCC 49558 / DSM 4304 / JCM 9628 / NBRC 100126 / VC-16).